We begin with the raw amino-acid sequence, 317 residues long: Olfactory receptor 5K17 (317 aa).

The Extracellular segment spans residues 1 to 28 (MMKANHSLTVEFILIGFSDHTDLKTLLF). Residue asparagine 5 is glycosylated (N-linked (GlcNAc...) asparagine). Residues 29 to 49 (LLFSAIYLVTIVGNLGLVALI) form a helical membrane-spanning segment. The Cytoplasmic portion of the chain corresponds to 50 to 56 (YMEPRLH). Residues 57-77 (TPMYIFLGNLALMDSCCSCAI) traverse the membrane as a helical segment. The Extracellular portion of the chain corresponds to 78–93 (TPKMLENFFSVDRRIS). Residues 94-114 (LYECMVQFYFLCLAETADCFL) form a helical membrane-spanning segment. Cysteine 97 and cysteine 189 are oxidised to a cystine. Topologically, residues 115-144 (LAAMAYDRYVAICNPLQYHTMMSKKLSIQM) are cytoplasmic. A helical membrane pass occupies residues 145 to 165 (SIGTFIASNLHSLIHTGCLLR). Over 166 to 198 (LNFCKSRRIDHFFCDILPLYKLSCTDPFINELM) the chain is Extracellular. The helical transmembrane segment at 199–219 (LYIFSMPIQVFTITTVLVSYS) threads the bilayer. The Cytoplasmic segment spans residues 220–239 (CILLTVFKMKSKDGRGKAFS). The helical transmembrane segment at 240–259 (TCASHFFSVSIFYICLLMYI) threads the bilayer. Residues 260 to 268 (GPSKNSNKD) are Extracellular-facing. Residues 269-289 (IPVGVFYTIVIPLLNPFIYSL) form a helical membrane-spanning segment. Residues 290 to 317 (RNKEVVNAVKKVMKTHSIFKNSSASIAH) lie on the Cytoplasmic side of the membrane.

This sequence belongs to the G-protein coupled receptor 1 family.

It localises to the cell membrane. Potential odorant receptor. The chain is Olfactory receptor 5K17 from Mus musculus (Mouse).